The primary structure comprises 179 residues: MSDLKKIYQDEIAPKLKEELGLGNIMEVPKITKITLNMGVGEASADRKAMEGALSDMTAISGQKPLVTNARKSVAGFKIREGWPIGCKVTMRNQRMYEFLERLVSVAIPRIRDFRGLNPKSFDGRGNFSMGLREQIVFPEIDFDKVDKLRGMDITITTTAKTDDEARALLRAFNFPLKG.

This sequence belongs to the universal ribosomal protein uL5 family. As to quaternary structure, part of the 50S ribosomal subunit; part of the 5S rRNA/L5/L18/L25 subcomplex. Contacts the 5S rRNA and the P site tRNA. Forms a bridge to the 30S subunit in the 70S ribosome.

Functionally, this is one of the proteins that bind and probably mediate the attachment of the 5S RNA into the large ribosomal subunit, where it forms part of the central protuberance. In the 70S ribosome it contacts protein S13 of the 30S subunit (bridge B1b), connecting the 2 subunits; this bridge is implicated in subunit movement. Contacts the P site tRNA; the 5S rRNA and some of its associated proteins might help stabilize positioning of ribosome-bound tRNAs. The chain is Large ribosomal subunit protein uL5 from Alcanivorax borkumensis (strain ATCC 700651 / DSM 11573 / NCIMB 13689 / SK2).